Here is a 153-residue protein sequence, read N- to C-terminus: Ribonuclease K3 (153 aa).

The N-terminal stretch at 1–26 (MGPDLRCFPLLLLLLGLWWSVRPLCA) is a signal peptide. N30 is a glycosylation site (N-linked (GlcNAc...) asparagine). The active-site Proton acceptor is the H41. 4 cysteine pairs are disulfide-bonded: C49–C107, C63–C117, C81–C132, and C88–C95. A glycan (N-linked (GlcNAc...) asparagine) is linked at N58. 64–68 (KPQNT) lines the substrate pocket. A glycan (N-linked (GlcNAc...) asparagine) is linked at N85. K89 contacts substrate. Catalysis depends on H148, which acts as the Proton donor.

It belongs to the pancreatic ribonuclease family. As to quaternary structure, interacts (via N-terminus) with bacterial lipopolysaccharide (LPS). As to expression, kidney.

The protein resides in the secreted. It localises to the lysosome. The protein localises to the cytoplasmic granule. In terms of biological role, ribonuclease which shows a preference for the pyrimidines uridine and cytosine. Has potent antibacterial activity against a range of Gram-positive and Gram-negative bacteria, including P.aeruginosa, A.baumanii, M.luteus, S.aureus, E.faecalis, E.faecium, S.saprophyticus and E.coli. Causes loss of bacterial membrane integrity, and also promotes agglutination of Gram-negative bacteria. Probably contributes to urinary tract sterility. Bactericidal activity is independent of RNase activity. This is Ribonuclease K3 (RNASE6) from Sus scrofa (Pig).